Consider the following 1106-residue polypeptide: Probable ATP-citrate synthase (1106 aa).

Citrate contacts are provided by N358, T360, and R391. Polar residues predominate over residues 442–459 (APQTTGQFLLSPERNTGG). The segment at 442 to 478 (APQTTGQFLLSPERNTGGTERAPPSPAANATPTEHPL) is disordered. ATP-binding positions include 701–721 (VIRY…EVGG) and 752–778 (ITSE…KNAA). E718 contacts Mg(2+). H760 acts as the Tele-phosphohistidine intermediate in catalysis. 779 to 789 (LRASGALVPES) provides a ligand contact to CoA.

This sequence in the N-terminal section; belongs to the succinate/malate CoA ligase beta subunit family. It in the C-terminal section; belongs to the succinate/malate CoA ligase alpha subunit family. As to quaternary structure, homotetramer.

It localises to the cytoplasm. It carries out the reaction oxaloacetate + acetyl-CoA + ADP + phosphate = citrate + ATP + CoA. Its function is as follows. Catalyzes the cleavage of citrate into oxaloacetate and acetyl-CoA, the latter serving as common substrate in multiple biochemical reactions in protein, carbohydrate and lipid metabolism. This is Probable ATP-citrate synthase from Caenorhabditis elegans.